Reading from the N-terminus, the 77-residue chain is MRKQQKIHVKIGDNVKIITGFDKNKIGKVSKIDRNTGKIIVKGINFKFKHIKPNAENEVGEIKQFEAPIHHSNVKLN.

This sequence belongs to the universal ribosomal protein uL24 family. In terms of assembly, part of the 50S ribosomal subunit.

The protein resides in the plastid. It is found in the chloroplast. Functionally, one of two assembly initiator proteins, it binds directly to the 5'-end of the 23S rRNA, where it nucleates assembly of the 50S subunit. The chain is Large ribosomal subunit protein uL24c (rpl24) from Trieres chinensis (Marine centric diatom).